Reading from the N-terminus, the 190-residue chain is Peptidyl-tRNA hydrolase (190 aa).

Tyr-18 is a binding site for tRNA. His-23 functions as the Proton acceptor in the catalytic mechanism. TRNA contacts are provided by Phe-69, Asn-71, and Asn-117.

It belongs to the PTH family. Monomer.

It localises to the cytoplasm. The enzyme catalyses an N-acyl-L-alpha-aminoacyl-tRNA + H2O = an N-acyl-L-amino acid + a tRNA + H(+). Its function is as follows. Hydrolyzes ribosome-free peptidyl-tRNAs (with 1 or more amino acids incorporated), which drop off the ribosome during protein synthesis, or as a result of ribosome stalling. Functionally, catalyzes the release of premature peptidyl moieties from peptidyl-tRNA molecules trapped in stalled 50S ribosomal subunits, and thus maintains levels of free tRNAs and 50S ribosomes. The sequence is that of Peptidyl-tRNA hydrolase from Rhodococcus jostii (strain RHA1).